A 750-amino-acid polypeptide reads, in one-letter code: Photosystem I P700 chlorophyll a apoprotein A1 (750 aa).

8 helical membrane-spanning segments follow: residues 70 to 93 (VFSAHFGQLSIIFLWLSGMYFHGA), 156 to 179 (LYCTAIGALVFAALMLFAGWFHYH), 195 to 219 (LNHHLAGLLGLGSLSWAGHQVHVSL), 291 to 309 (IAHHHLAIAILFLIAGHMY), 346 to 369 (WHAQLSLNLAMLGSLTIVVAHHMY), 385 to 411 (LSLFTHHMWIGGFLIVGAAAHAAIFMV), 433 to 455 (AIISHLNWACIFLGFHSFGLYIH), and 531 to 549 (FLVHHIHAFTIHVTVLILL). [4Fe-4S] cluster-binding residues include Cys573 and Cys582. The next 2 helical transmembrane spans lie at 589–610 (HVFLGLFWMYNSISVVIFHFSW) and 664–686 (LSAYGLFFLGAHFVWAFSLMFLF). Chlorophyll a' is bound at residue His675. Residues Met683 and Tyr691 each coordinate chlorophyll a. Trp692 lines the phylloquinone pocket. A helical membrane pass occupies residues 724–744 (AVGVTHYLLGGIATTWAFFLA).

The protein belongs to the PsaA/PsaB family. In terms of assembly, the PsaA/B heterodimer binds the P700 chlorophyll special pair and subsequent electron acceptors. PSI consists of a core antenna complex that captures photons, and an electron transfer chain that converts photonic excitation into a charge separation. The eukaryotic PSI reaction center is composed of at least 11 subunits. Requires P700 is a chlorophyll a/chlorophyll a' dimer, A0 is one or more chlorophyll a, A1 is one or both phylloquinones and FX is a shared 4Fe-4S iron-sulfur center. as cofactor.

The protein localises to the plastid. It is found in the chloroplast thylakoid membrane. The enzyme catalyses reduced [plastocyanin] + hnu + oxidized [2Fe-2S]-[ferredoxin] = oxidized [plastocyanin] + reduced [2Fe-2S]-[ferredoxin]. Its function is as follows. PsaA and PsaB bind P700, the primary electron donor of photosystem I (PSI), as well as the electron acceptors A0, A1 and FX. PSI is a plastocyanin-ferredoxin oxidoreductase, converting photonic excitation into a charge separation, which transfers an electron from the donor P700 chlorophyll pair to the spectroscopically characterized acceptors A0, A1, FX, FA and FB in turn. Oxidized P700 is reduced on the lumenal side of the thylakoid membrane by plastocyanin. In Solanum bulbocastanum (Wild potato), this protein is Photosystem I P700 chlorophyll a apoprotein A1.